The chain runs to 81 residues: Large ribosomal subunit protein bL31B (81 aa).

Belongs to the bacterial ribosomal protein bL31 family. Type B subfamily. In terms of assembly, part of the 50S ribosomal subunit.

The chain is Large ribosomal subunit protein bL31B from Limosilactobacillus reuteri (strain DSM 20016) (Lactobacillus reuteri).